We begin with the raw amino-acid sequence, 161 residues long: Large ribosomal subunit protein bL9 (161 aa).

Belongs to the bacterial ribosomal protein bL9 family.

In terms of biological role, binds to the 23S rRNA. This is Large ribosomal subunit protein bL9 from Protochlamydia amoebophila (strain UWE25).